The chain runs to 411 residues: MREHFNDGVEFARFLAHRFVTDKAPNSAAALTYTTLFAVVPMMTVMFSMLSLIPAFHGMGESIQTFIFRNFVPSAGEAVETYLKSFTTQARHLTWVGVVFLAVTAFTMLVTIEKAFNEIWRVRQPRRGVGRFLLYWAILSLGPLLLGAGFAVTTYITSLSLLHGPDALPGAETLLGLMPLAFSVAAFTLLYSAVPNARVPVRHALMGGVFTAVLFEAAKTLFGLYVSLFPGYQLIYGAFATVPIFLLWIYLSWMIVLFGAVLVCNLSSSRLWRRRSLPKLIVLLGVLRVFHQRQQLGQSLRLTHLHRAGWLLPEDEWEELLDFLEKEQFVCRAGGGEWVLCRDLGAYSLHRLLNRCPWPMPSRERMPASLDEAWYPPFQQAMERLQVEQEALFGESLAHWLADGTSGAKVT.

6 helical membrane passes run 36–56 (LFAVVPMMTVMFSMLSLIPAF), 92–112 (HLTWVGVVFLAVTAFTMLVTI), 132–152 (FLLYWAILSLGPLLLGAGFAV), 174–194 (LLGLMPLAFSVAAFTLLYSAV), 207–229 (GGVFTAVLFEAAKTLFGLYVSLF), and 244–264 (IFLLWIYLSWMIVLFGAVLVC).

This sequence belongs to the UPF0761 family.

The protein localises to the cell inner membrane. This is UPF0761 membrane protein PLES_43641 from Pseudomonas aeruginosa (strain LESB58).